The following is a 674-amino-acid chain: Methionine--tRNA ligase (674 aa).

Residues 11-21 carry the 'HIGH' region motif; it reads PYANGDLHLGH. C142, C145, C155, and C158 together coordinate Zn(2+). A 'KMSKS' region motif is present at residues 330–334; sequence KMSKS. K333 contributes to the ATP binding site. A tRNA-binding domain is found at 574 to 674; it reads DFMKVDLRIA…EGAQPGMRVK (101 aa).

This sequence belongs to the class-I aminoacyl-tRNA synthetase family. MetG type 1 subfamily. As to quaternary structure, homodimer. Zn(2+) is required as a cofactor.

It localises to the cytoplasm. The enzyme catalyses tRNA(Met) + L-methionine + ATP = L-methionyl-tRNA(Met) + AMP + diphosphate. Functionally, is required not only for elongation of protein synthesis but also for the initiation of all mRNA translation through initiator tRNA(fMet) aminoacylation. The polypeptide is Methionine--tRNA ligase (Francisella tularensis subsp. tularensis (strain WY96-3418)).